The chain runs to 98 residues: Ribonuclease P protein component 4 (98 aa).

Zn(2+) is bound by residues C62, C65, C85, and C88.

Belongs to the eukaryotic/archaeal RNase P protein component 4 family. As to quaternary structure, consists of a catalytic RNA component and at least 4-5 protein subunits. It depends on Zn(2+) as a cofactor.

It localises to the cytoplasm. The catalysed reaction is Endonucleolytic cleavage of RNA, removing 5'-extranucleotides from tRNA precursor.. In terms of biological role, part of ribonuclease P, a protein complex that generates mature tRNA molecules by cleaving their 5'-ends. In Thermoplasma volcanium (strain ATCC 51530 / DSM 4299 / JCM 9571 / NBRC 15438 / GSS1), this protein is Ribonuclease P protein component 4.